Reading from the N-terminus, the 341-residue chain is Guanine nucleotide-binding protein subunit beta (341 aa).

WD repeat units follow at residues 54–84 (GHLA…IVWD), 96–126 (LRSS…SIYS), 142–171 (GHTG…ALWD), 183–213 (GHTG…KLWD), 225–255 (GHES…RLFD), 269–299 (NIIC…NVWD), and 311–341 (GHDN…KIWN).

This sequence belongs to the WD repeat G protein beta family. G proteins are composed of 3 units, alpha, beta and gamma.

Its function is as follows. Guanine nucleotide-binding proteins (G proteins) are involved as a modulator or transducer in various transmembrane signaling systems. The beta and gamma chains are required for the GTPase activity, for replacement of GDP by GTP, and for G protein-effector interaction. This is Guanine nucleotide-binding protein subunit beta from Lymnaea stagnalis (Great pond snail).